Reading from the N-terminus, the 90-residue chain is Auxin-responsive protein SAUR23 (90 aa).

This sequence belongs to the ARG7 family.

The protein localises to the cell membrane. Its function is as follows. Functions as a positive effector of cell expansion through modulation of auxin transport. This chain is Auxin-responsive protein SAUR23, found in Arabidopsis thaliana (Mouse-ear cress).